A 376-amino-acid chain; its full sequence is Copper-containing nitrite reductase (376 aa).

The tat-type signal signal peptide spans 1–33; the sequence is MSEQFQMTRRSMLAGAAIAGAVTPLIGAVSAHA. Plastocyanin-like domains are found at residues 98 to 193 and 258 to 359; these read MTFN…IMVL and GAVG…FAVT. Positions 131, 136, 171, 172, 181, 186, and 342 each coordinate Cu cation.

It belongs to the multicopper oxidase family. In terms of assembly, homotrimer. Cu(2+) serves as cofactor. Requires Cu(+) as cofactor. FAD is required as a cofactor. In terms of processing, predicted to be exported by the Tat system. The position of the signal peptide cleavage has not been experimentally proven.

It is found in the periplasm. It carries out the reaction nitric oxide + Fe(III)-[cytochrome c] + H2O = Fe(II)-[cytochrome c] + nitrite + 2 H(+). It participates in nitrogen metabolism; nitrate reduction (denitrification); dinitrogen from nitrate: step 2/4. In Rhizobium meliloti (strain 1021) (Ensifer meliloti), this protein is Copper-containing nitrite reductase (nirK).